Reading from the N-terminus, the 1086-residue chain is Auxin response factor 19 (1086 aa).

The TF-B3 DNA-binding region spans 126–228 (FCKTLTASDT…QLMLGIRRAN (103 aa)). The span at 454 to 485 (PSKLLNFQSPNLSSANSQFNKPNTVNHISQQM) shows a compositional bias: polar residues. Disordered regions lie at residues 454–504 (PSKL…QQQQ), 545–564 (QSPN…QSML), 624–647 (LSQN…QQLQ), and 659–788 (QQQS…SVFE). The span at 486-504 (QAQPAMVKSQQQQQQQQQQ) shows a compositional bias: low complexity. The span at 659-697 (QQQSIPPVSSSLQPQLSALQQTQSHQLQQLLSSQNQQPL) shows a compositional bias: low complexity. The segment covering 700–710 (GNNSFPASTFM) has biased composition (polar residues). Low complexity predominate over residues 711–724 (QPPQIQVSPQQQGQ). Residues 747-771 (SCSTSPSANNTGHDNVSPTNFLSRN) are compositionally biased toward polar residues. The segment covering 772 to 785 (QQQGQAASVSASDS) has biased composition (low complexity). In terms of domain architecture, PB1 spans 958 to 1051 (RTYTKVQKRG…EVQQMSLDGD (94 aa)).

Belongs to the ARF family. As to quaternary structure, homodimers and heterodimers. Interacts with the auxin-responsive protein IAA1. Binds to JMJ30. Binds to ATXR2 in the nucleus.

Its subcellular location is the nucleus. Auxin response factors (ARFs) are transcriptional factors that bind specifically to the DNA sequence 5'-TGTCTC-3' found in the auxin-responsive promoter elements (AuxREs). Could act as transcriptional activator or repressor. Formation of heterodimers with Aux/IAA proteins may alter their ability to modulate early auxin response genes expression. Involved in ethylene responses. Regulates lateral root formation through direct regulation of LBD16 and/or LBD29. Functionally redundant with ARF7. Involved in cellular dedifferentiation during callus formation on callus-inducing medium (CIM) and in an ATXR2-dependent manner. The protein is Auxin response factor 19 of Arabidopsis thaliana (Mouse-ear cress).